The chain runs to 207 residues: LexA repressor (207 aa).

The H-T-H motif DNA-binding region spans 28 to 48 (VREIGEAVGLASSSTVHGHLS). Catalysis depends on for autocatalytic cleavage activity residues S130 and K168.

Belongs to the peptidase S24 family. Homodimer.

The catalysed reaction is Hydrolysis of Ala-|-Gly bond in repressor LexA.. Functionally, represses a number of genes involved in the response to DNA damage (SOS response), including recA and lexA. In the presence of single-stranded DNA, RecA interacts with LexA causing an autocatalytic cleavage which disrupts the DNA-binding part of LexA, leading to derepression of the SOS regulon and eventually DNA repair. This Staphylococcus aureus (strain MSSA476) protein is LexA repressor.